Consider the following 666-residue polypeptide: DNA ligase (666 aa).

NAD(+) is bound by residues 31–35 (DKEFD), 80–81 (SL), and glutamate 110. Lysine 112 functions as the N6-AMP-lysine intermediate in the catalytic mechanism. The NAD(+) site is built by arginine 133, glutamate 170, lysine 285, and lysine 309. Zn(2+)-binding residues include cysteine 404, cysteine 407, cysteine 422, and cysteine 428. Positions 588–666 (GYTDKLAGQS…SEDEFLKLIS (79 aa)) constitute a BRCT domain.

It belongs to the NAD-dependent DNA ligase family. LigA subfamily. Mg(2+) serves as cofactor. Requires Mn(2+) as cofactor.

It catalyses the reaction NAD(+) + (deoxyribonucleotide)n-3'-hydroxyl + 5'-phospho-(deoxyribonucleotide)m = (deoxyribonucleotide)n+m + AMP + beta-nicotinamide D-nucleotide.. In terms of biological role, DNA ligase that catalyzes the formation of phosphodiester linkages between 5'-phosphoryl and 3'-hydroxyl groups in double-stranded DNA using NAD as a coenzyme and as the energy source for the reaction. It is essential for DNA replication and repair of damaged DNA. The sequence is that of DNA ligase from Bacteroides thetaiotaomicron (strain ATCC 29148 / DSM 2079 / JCM 5827 / CCUG 10774 / NCTC 10582 / VPI-5482 / E50).